Reading from the N-terminus, the 304-residue chain is tRNA pseudouridine synthase B (304 aa).

Aspartate 48 serves as the catalytic Nucleophile.

The protein belongs to the pseudouridine synthase TruB family. Type 1 subfamily.

It carries out the reaction uridine(55) in tRNA = pseudouridine(55) in tRNA. In terms of biological role, responsible for synthesis of pseudouridine from uracil-55 in the psi GC loop of transfer RNAs. The sequence is that of tRNA pseudouridine synthase B from Pseudomonas paraeruginosa (strain DSM 24068 / PA7) (Pseudomonas aeruginosa (strain PA7)).